The chain runs to 124 residues: UPF0102 protein Blon_1698/BLIJ_1758 (124 aa).

Belongs to the UPF0102 family.

The protein is UPF0102 protein Blon_1698/BLIJ_1758 of Bifidobacterium longum subsp. infantis (strain ATCC 15697 / DSM 20088 / JCM 1222 / NCTC 11817 / S12).